The sequence spans 191 residues: Negative modulator of initiation of replication (191 aa).

The tract at residues 96–97 (AV) is interaction with DNA.

It belongs to the SeqA family. As to quaternary structure, homodimer. Polymerizes to form helical filaments.

The protein localises to the cytoplasm. In terms of biological role, negative regulator of replication initiation, which contributes to regulation of DNA replication and ensures that replication initiation occurs exactly once per chromosome per cell cycle. Binds to pairs of hemimethylated GATC sequences in the oriC region, thus preventing assembly of replication proteins and re-initiation at newly replicated origins. Repression is relieved when the region becomes fully methylated. This Shewanella amazonensis (strain ATCC BAA-1098 / SB2B) protein is Negative modulator of initiation of replication.